Here is a 1392-residue protein sequence, read N- to C-terminus: ATP-dependent helicase/nuclease subunit A (1392 aa).

Positions 3–489 (NPKWTPAQQA…IDLNQNFRSR (487 aa)) constitute a UvrD-like helicase ATP-binding domain. 24 to 31 (AAAGSGKT) is an ATP binding site. Disordered stretches follow at residues 291–319 (RGSK…KARD), 555–594 (KRGA…LEEA), and 1051–1126 (GPVQ…LDTK). 2 stretches are compositionally biased toward basic and acidic residues: residues 305–319 (ENSK…KARD) and 567–583 (SPAK…REPE). The region spanning 556-886 (RGAEDAATEV…RFITVHSSKG (331 aa)) is the UvrD-like helicase C-terminal domain. A compositionally biased stretch (acidic residues) spans 584 to 594 (SGDDESSLEEA). Basic and acidic residues predominate over residues 1088–1113 (ASGKTEIPGETKNSEETKTSEDKKNL).

Belongs to the helicase family. AddA subfamily. In terms of assembly, heterodimer of AddA and AddB/RexB. Mg(2+) serves as cofactor.

It catalyses the reaction Couples ATP hydrolysis with the unwinding of duplex DNA by translocating in the 3'-5' direction.. It carries out the reaction ATP + H2O = ADP + phosphate + H(+). Functionally, the heterodimer acts as both an ATP-dependent DNA helicase and an ATP-dependent, dual-direction single-stranded exonuclease. Recognizes the chi site generating a DNA molecule suitable for the initiation of homologous recombination. The AddA nuclease domain is required for chi fragment generation; this subunit has the helicase and 3' -&gt; 5' nuclease activities. The protein is ATP-dependent helicase/nuclease subunit A of Desulfitobacterium hafniense (strain DSM 10664 / DCB-2).